Consider the following 242-residue polypeptide: Probable transcriptional regulatory protein Csac_0964 (242 aa).

The interval 1–20 is disordered; the sequence is MSGHSKWANIRHKKEKTDAQ.

This sequence belongs to the TACO1 family.

It localises to the cytoplasm. This chain is Probable transcriptional regulatory protein Csac_0964, found in Caldicellulosiruptor saccharolyticus (strain ATCC 43494 / DSM 8903 / Tp8T 6331).